The sequence spans 338 residues: Tagatose 1,6-diphosphate aldolase (338 aa).

It belongs to the aldolase LacD family.

The enzyme catalyses D-tagatofuranose 1,6-bisphosphate = D-glyceraldehyde 3-phosphate + dihydroxyacetone phosphate. It participates in carbohydrate metabolism; D-tagatose 6-phosphate degradation; D-glyceraldehyde 3-phosphate and glycerone phosphate from D-tagatose 6-phosphate: step 2/2. The protein is Tagatose 1,6-diphosphate aldolase of Listeria innocua serovar 6a (strain ATCC BAA-680 / CLIP 11262).